An 89-amino-acid polypeptide reads, in one-letter code: Small ribosomal subunit protein uS17 (89 aa).

It belongs to the universal ribosomal protein uS17 family. Part of the 30S ribosomal subunit.

One of the primary rRNA binding proteins, it binds specifically to the 5'-end of 16S ribosomal RNA. This chain is Small ribosomal subunit protein uS17, found in Syntrophomonas wolfei subsp. wolfei (strain DSM 2245B / Goettingen).